Consider the following 269-residue polypeptide: 4-hydroxy-tetrahydrodipicolinate reductase (269 aa).

Residues 13-18 (GASGRM) and Asp-39 each bind NAD(+). Residue Arg-40 coordinates NADP(+). NAD(+) contacts are provided by residues 101–103 (GTT) and 125–128 (APNM). His-158 (proton donor/acceptor) is an active-site residue. Residue His-159 participates in (S)-2,3,4,5-tetrahydrodipicolinate binding. Catalysis depends on Lys-162, which acts as the Proton donor. 168–169 (GT) serves as a coordination point for (S)-2,3,4,5-tetrahydrodipicolinate.

This sequence belongs to the DapB family.

The protein resides in the cytoplasm. It catalyses the reaction (S)-2,3,4,5-tetrahydrodipicolinate + NAD(+) + H2O = (2S,4S)-4-hydroxy-2,3,4,5-tetrahydrodipicolinate + NADH + H(+). The catalysed reaction is (S)-2,3,4,5-tetrahydrodipicolinate + NADP(+) + H2O = (2S,4S)-4-hydroxy-2,3,4,5-tetrahydrodipicolinate + NADPH + H(+). It participates in amino-acid biosynthesis; L-lysine biosynthesis via DAP pathway; (S)-tetrahydrodipicolinate from L-aspartate: step 4/4. Its function is as follows. Catalyzes the conversion of 4-hydroxy-tetrahydrodipicolinate (HTPA) to tetrahydrodipicolinate. This chain is 4-hydroxy-tetrahydrodipicolinate reductase, found in Bordetella pertussis (strain Tohama I / ATCC BAA-589 / NCTC 13251).